Reading from the N-terminus, the 722-residue chain is Glycine--tRNA ligase beta subunit (722 aa).

The protein belongs to the class-II aminoacyl-tRNA synthetase family. Tetramer of two alpha and two beta subunits.

Its subcellular location is the cytoplasm. The catalysed reaction is tRNA(Gly) + glycine + ATP = glycyl-tRNA(Gly) + AMP + diphosphate. The sequence is that of Glycine--tRNA ligase beta subunit (glyS) from Xylella fastidiosa (strain 9a5c).